The chain runs to 182 residues: Probable tryptophan transport protein (182 aa).

The next 4 helical transmembrane spans lie at 10–32, 55–75, 119–141, and 146–168; these read ITIN…VLGL, ITMV…KFPG, IVLP…IIVG, and FSIL…GLVL.

It belongs to the vitamin uptake transporter (VUT/ECF) (TC 2.A.88) family. TrpP subfamily.

It localises to the cell membrane. Probably involved in tryptophan uptake. The chain is Probable tryptophan transport protein (trpP) from Clostridium perfringens (strain 13 / Type A).